The primary structure comprises 622 residues: Glutamyl-tRNA(Gln) amidotransferase subunit E (622 aa).

This sequence belongs to the GatB/GatE family. GatE subfamily. Heterodimer of GatD and GatE.

The catalysed reaction is L-glutamyl-tRNA(Gln) + L-glutamine + ATP + H2O = L-glutaminyl-tRNA(Gln) + L-glutamate + ADP + phosphate + H(+). Its function is as follows. Allows the formation of correctly charged Gln-tRNA(Gln) through the transamidation of misacylated Glu-tRNA(Gln) in organisms which lack glutaminyl-tRNA synthetase. The reaction takes place in the presence of glutamine and ATP through an activated gamma-phospho-Glu-tRNA(Gln). The GatDE system is specific for glutamate and does not act on aspartate. The chain is Glutamyl-tRNA(Gln) amidotransferase subunit E from Halobacterium salinarum (strain ATCC 29341 / DSM 671 / R1).